The chain runs to 375 residues: G-protein coupled estrogen receptor 1 (375 aa).

Residue M1 is modified to N-acetylmethionine. Over M1–S62 the chain is Extracellular. N-linked (GlcNAc...) asparagine glycans are attached at residues N32 and N44. The chain crosses the membrane as a helical span at residues C63 to N84. Topologically, residues I85–L96 are cytoplasmic. Residues Y97 to D120 form a helical membrane-spanning segment. Topologically, residues E121–F132 are extracellular. C130 and C207 form a disulfide bridge. Residues M133–F153 form a helical membrane-spanning segment. Over D154–R175 the chain is Cytoplasmic. The chain crosses the membrane as a helical span at residues L176 to T194. Topologically, residues A195 to T220 are extracellular. Residues L221–L236 traverse the membrane as a helical segment. Topologically, residues I237–R259 are cytoplasmic. Residues M260–S280 traverse the membrane as a helical segment. Residues V281–G306 are Extracellular-facing. A helical transmembrane segment spans residues H307 to L327. The Cytoplasmic portion of the chain corresponds to G328–V375.

Belongs to the G-protein coupled receptor 1 family. In terms of assembly, homodimer. Heterodimer; heterodimerizes with other G-protein-coupled receptor (GPCRs) like CRHR1, HTR1A and PAQR8. Interacts with RAMP3; the interaction confers proper subcellular localization and function in cardioprotection. Interacts with KRT7 and KRT8. Interacts with EGFR; the interaction increases after agonist-induced stimulation in cancer-associated fibroblasts (CAF). Interacts with EGFR and ESR1. Interacts (via C-terminus tail motif) with DLG4 (via N-terminus tandem pair of PDZ domains); the interaction is direct and induces the increase of GPER1 protein levels residing at the plasma membrane surface in a estradiol-independent manner. In terms of processing, ubiquitinated; ubiquitination occurs at the plasma membrane and leads to proteasome-mediated degradation. Glycosylated. Expressed in the brain. Expressed in neurons of the hippocampus, hypothalamic paraventricular nucleus (PVN), supraoptic nucleus (SON) and the median eminence. Expressed in magnocellular neurosecretory cells (MNCs) which secrete oxytocin but not in MNCs which secrete vasopressin. Expressed in glial cells. Expressed in the nucleus ambiguous. Expressed in epithelial cells, in pachytene spermatocytes (PS) (at protein level). Expressed strongly in vascular endothelial cells and poorly in vascular smooth muscle cells (VSMC). Expressed in the brain, lung, pituitary gland, adrenal medulla, renal pelvis and ovary. Expressed in CA1 hippocampus. Expressed weakly in heart, skeletal muscle and kidney.

The protein resides in the nucleus. Its subcellular location is the cytoplasm. It localises to the perinuclear region. It is found in the cytoskeleton. The protein localises to the cytoplasmic vesicle membrane. The protein resides in the cell membrane. Its subcellular location is the basolateral cell membrane. It localises to the endoplasmic reticulum membrane. It is found in the early endosome. The protein localises to the recycling endosome. The protein resides in the golgi apparatus. Its subcellular location is the trans-Golgi network. It localises to the golgi apparatus membrane. It is found in the cell projection. The protein localises to the dendrite. The protein resides in the dendritic spine membrane. Its subcellular location is the axon. It localises to the postsynaptic density. It is found in the mitochondrion membrane. In terms of biological role, G-protein coupled estrogen receptor that binds to 17-beta-estradiol (E2) with high affinity, leading to rapid and transient activation of numerous intracellular signaling pathways. Stimulates cAMP production, calcium mobilization and tyrosine kinase Src inducing the release of heparin-bound epidermal growth factor (HB-EGF) and subsequent transactivation of the epidermal growth factor receptor (EGFR), activating downstream signaling pathways such as PI3K/Akt and ERK/MAPK. Mediates pleiotropic functions among others in the cardiovascular, endocrine, reproductive, immune and central nervous systems. Has a role in cardioprotection by reducing cardiac hypertrophy and perivascular fibrosis in a RAMP3-dependent manner. Regulates arterial blood pressure by stimulating vasodilation and reducing vascular smooth muscle and microvascular endothelial cell proliferation. Plays a role in blood glucose homeostasis contributing to the insulin secretion response by pancreatic beta cells. Triggers mitochondrial apoptosis during pachytene spermatocyte differentiation. Stimulates uterine epithelial cell proliferation. Enhances uterine contractility in response to oxytocin. Contributes to thymic atrophy by inducing apoptosis. Attenuates TNF-mediated endothelial expression of leukocyte adhesion molecules. Promotes neuritogenesis in developing hippocampal neurons. Plays a role in acute neuroprotection against NMDA-induced excitotoxic neuronal death. Increases firing activity and intracellular calcium oscillations in luteinizing hormone-releasing hormone (LHRH) neurons. Inhibits early osteoblast proliferation at growth plate during skeletal development. Inhibits mature adipocyte differentiation and lipid accumulation. Involved in the recruitment of beta-arrestin 2 ARRB2 at the plasma membrane in epithelial cells. Also functions as a receptor for aldosterone mediating rapid regulation of vascular contractibility through the PI3K/ERK signaling pathway. Involved in cancer progression regulation. Stimulates cancer-associated fibroblast (CAF) proliferation by a rapid genomic response through the EGFR/ERK transduction pathway. Associated with EGFR, may act as a transcription factor activating growth regulatory genes (c-fos, cyclin D1). Promotes integrin alpha-5/beta-1 and fibronectin (FN) matrix assembly in breast cancer cells. This chain is G-protein coupled estrogen receptor 1 (Gper1), found in Rattus norvegicus (Rat).